A 424-amino-acid polypeptide reads, in one-letter code: Hemagglutinin-esterase (424 aa).

The N-terminal stretch at 1 to 16 (MFLLPRFVLVSCIIGS) is a signal peptide. The interval 7–127 (FVLVSCIIGS…SNDIWMQNKG (121 aa)) is esterase domain 1. Topologically, residues 17 to 392 (LGFDNPPTNV…PICVYDPLPL (376 aa)) are virion surface. Residue S40 is the Nucleophile of the active site. Cysteines 44 and 65 form a disulfide. Residues N54, N89, N153, N236, and N301 are each glycosylated (N-linked (GlcNAc...) asparagine; by host). 3 disulfide bridges follow: C113/C162, C197/C276, and C205/C249. The tract at residues 128 to 266 (LFYTQVYKNM…GNYLAISNEL (139 aa)) is receptor binding. The segment at 267 to 379 (LLTVPTKAIC…RCPTAADINN (113 aa)) is esterase domain 2. Residues C307 and C312 are joined by a disulfide bond. The N-linked (GlcNAc...) asparagine; by host glycan is linked to N316. Active-site charge relay system residues include D326 and H329. A disulfide bridge links C347 with C371. N-linked (GlcNAc...) asparagine; by host glycosylation is present at N358. Residues 393-413 (ILLGILLGVAVIIIVVLLLYF) traverse the membrane as a helical segment. Topologically, residues 414–424 (MVDNGTRLHDA) are intravirion. N417 is a glycosylation site (N-linked (GlcNAc...) asparagine; by host).

Belongs to the influenza type C/coronaviruses hemagglutinin-esterase family. In terms of assembly, homodimer; disulfide-linked. Forms a complex with the M protein in the pre-Golgi. Associates then with S-M complex to form a ternary complex S-M-HE. N-glycosylated in the host RER.

The protein resides in the virion membrane. The protein localises to the host cell membrane. The catalysed reaction is N-acetyl-9-O-acetylneuraminate + H2O = N-acetylneuraminate + acetate + H(+). The enzyme catalyses N-acetyl-4-O-acetylneuraminate + H2O = N-acetylneuraminate + acetate + H(+). Structural protein that makes short spikes at the surface of the virus. Contains receptor binding and receptor-destroying activities. Mediates de-O-acetylation of N-acetyl-4-O-acetylneuraminic acid, which is probably the receptor determinant recognized by the virus on the surface of erythrocytes and susceptible cells. This receptor-destroying activity is important for virus release as it probably helps preventing self-aggregation and ensures the efficient spread of the progeny virus from cell to cell. May serve as a secondary viral attachment protein for initiating infection, the spike protein being the major one. May become a target for both the humoral and the cellular branches of the immune system. The sequence is that of Hemagglutinin-esterase from Bovine coronavirus (strain LY-138) (BCoV).